A 411-amino-acid polypeptide reads, in one-letter code: tRNA (guanine(37)-N(1))-methyltransferase (411 aa).

S-adenosyl-L-methionine contacts are provided by residues histidine 216, 254 to 255, 282 to 283, and asparagine 303; these read DL and DG. Residues 391 to 411 form a disordered region; that stretch reads ERQASKQDDPKRRKVAAENAA.

This sequence belongs to the class I-like SAM-binding methyltransferase superfamily. TRM5/TYW2 family. As to quaternary structure, monomer.

The protein localises to the mitochondrion matrix. It localises to the nucleus. The protein resides in the cytoplasm. The enzyme catalyses guanosine(37) in tRNA + S-adenosyl-L-methionine = N(1)-methylguanosine(37) in tRNA + S-adenosyl-L-homocysteine + H(+). Functionally, specifically methylates the N1 position of guanosine-37 in various cytoplasmic and mitochondrial tRNAs. Methylation is not dependent on the nature of the nucleoside 5' of the target nucleoside. This is the first step in the biosynthesis of wybutosine (yW), a modified base adjacent to the anticodon of tRNAs and required for accurate decoding. The protein is tRNA (guanine(37)-N(1))-methyltransferase of Phytophthora infestans (strain T30-4) (Potato late blight agent).